The following is a 366-amino-acid chain: Lysophosphatidic acid receptor 1-A (366 aa).

At 1–52 (MASLSEFVSEPISMMSQTSAASESQCYYNETIAFFYNRSGKYLATEWNAVSK) the chain is on the extracellular side. 2 disulfide bridges follow: cysteine 26–cysteine 192 and cysteine 190–cysteine 197. Residues asparagine 29 and asparagine 37 are each glycosylated (N-linked (GlcNAc...) asparagine). Lysine 41 contributes to the a 1-acyl-sn-glycero-3-phosphate binding site. A helical membrane pass occupies residues 53–77 (LVMGLGITVCIFIMLANLLVMVAIY). Residues 78-85 (VNRRFHFP) lie on the Cytoplasmic side of the membrane. Residues 86 to 109 (IYYLMANLAAADFFAGLAYFYLMF) traverse the membrane as a helical segment. Topologically, residues 110 to 123 (NTGPNTRRLTVSTW) are extracellular. Residues 124 to 146 (LLRQGLIDTSLTASVANLLAIAI) traverse the membrane as a helical segment. 126 to 131 (RQGLID) serves as a coordination point for a 1-acyl-sn-glycero-3-phosphate. Topologically, residues 147 to 165 (ERHITVFRMQLHTRMSNRR) are cytoplasmic. A helical transmembrane segment spans residues 166–186 (VVVVIVVIWTVAIVMGAIPSV). Topologically, residues 187-206 (GWNCICDLEQCSNMAPLYSD) are extracellular. A helical membrane pass occupies residues 207–227 (SYLIFWTIFNLVTFVVMVVLY). Tryptophan 212 is an a 1-acyl-sn-glycero-3-phosphate binding site. The Cytoplasmic segment spans residues 228-257 (AHIFVYVRQKTMRMSRHSSGPRRNRDTMMS). Residues 258–282 (LLKTVVIVLGAFIVCWTPGLVLLLL) traverse the membrane as a helical segment. The Extracellular portion of the chain corresponds to 283–296 (DICCPQCNILAYEK). A disulfide bond links cysteine 286 and cysteine 289. A helical transmembrane segment spans residues 297–317 (FFLLLAEFNSAMNPIIYSYRD). Residues 318–366 (KEMSATFKQILCCQRTENVNGPTEGSDRSASSLNHTILAGVHSNDHSVV) lie on the Cytoplasmic side of the membrane.

The protein belongs to the G-protein coupled receptor 1 family. As to expression, expressed at high levels in oocytes and at lower levels in brain and spinal cord. Below detection level in lung, heart, kidney, liver, muscle, stomach, and intestine.

The protein localises to the cell surface. It is found in the cell membrane. Its subcellular location is the endosome. Receptor for lysophosphatidic acid (LPA). Plays a role in the reorganization of the actin cytoskeleton, cell migration, differentiation and proliferation, and thereby contributes to the responses to tissue damage and infectious agents. Activates downstream signaling cascades via the G(i)/G(o), G(12)/G(13), and G(q) families of heteromeric G proteins. Signaling inhibits adenylyl cyclase activity and decreases cellular cAMP levels. Signaling triggers an increase of cytoplasmic Ca(2+) levels. Signaling leads to the activation of phospholipase C (PLC) and the formation of inositol 1,4,5-trisphosphate. Signaling mediates activation of down-stream MAP kinases. Contributes to the regulation of cell shape. Promotes Rho-dependent reorganization of the actin cytoskeleton in neuronal cells and neurite retraction. Promotes the activation of Rho and the formation of actin stress fibers. Promotes formation of lamellipodia at the leading edge of migrating cells via activation of Rac. Through its function as lysophosphatidic acid receptor, plays a role in chemotaxis and cell migration, including responses to injury and wounding. Promotes cell proliferation in response to lysophosphatidic acid. The sequence is that of Lysophosphatidic acid receptor 1-A (lpar1-a) from Xenopus laevis (African clawed frog).